Here is a 243-residue protein sequence, read N- to C-terminus: LexA repressor 2 (243 aa).

A DNA-binding region (H-T-H motif) is located at residues 48 to 68 (IREIGDAVGLTSTSSVAHQLR). Residues Ser167 and Lys204 each act as for autocatalytic cleavage activity in the active site.

Belongs to the peptidase S24 family. Homodimer.

It carries out the reaction Hydrolysis of Ala-|-Gly bond in repressor LexA.. Its function is as follows. Represses a number of genes involved in the response to DNA damage (SOS response), including recA and lexA. In the presence of single-stranded DNA, RecA interacts with LexA causing an autocatalytic cleavage which disrupts the DNA-binding part of LexA, leading to derepression of the SOS regulon and eventually DNA repair. This Nocardia farcinica (strain IFM 10152) protein is LexA repressor 2.